We begin with the raw amino-acid sequence, 91 residues long: Signal peptidase complex subunit 1 (91 aa).

Residues 1–28 lie on the Cytoplasmic side of the membrane; the sequence is MEIFNDLSRKLVFPIDYPSQRRVAKLTD. Residues 29–48 form a helical membrane-spanning segment; the sequence is IILGSGTLVSCLLGFYAGSL. The Lumenal segment spans residues 49 to 51; the sequence is SLT. The helical transmembrane segment at 52-71 threads the bilayer; the sequence is LYAFAAAYGLALLLVVPAYG. The Cytoplasmic segment spans residues 72–91; it reads KYRQQKLAWVGSAAATTKDL.

Belongs to the SPCS1 family. As to quaternary structure, component of the signal peptidase complex (SPC) composed of a catalytic subunit SEC11 and three accessory subunits SPC1, SPC2 and SPC3. The complex induces a local thinning of the ER membrane which is used to measure the length of the signal peptide (SP) h-region of protein substrates. This ensures the selectivity of the complex towards h-regions shorter than 18-20 amino acids. SPC associates with the translocon complex.

It is found in the endoplasmic reticulum membrane. Its function is as follows. Component of the signal peptidase complex (SPC) which catalyzes the cleavage of N-terminal signal sequences from nascent proteins as they are translocated into the lumen of the endoplasmic reticulum. Dispensable for SPC enzymatic activity. In Eremothecium gossypii (strain ATCC 10895 / CBS 109.51 / FGSC 9923 / NRRL Y-1056) (Yeast), this protein is Signal peptidase complex subunit 1 (SPC1).